The primary structure comprises 145 residues: D-aminoacyl-tRNA deacylase (145 aa).

Residues 137-138 (GP) carry the Gly-cisPro motif, important for rejection of L-amino acids motif.

The protein belongs to the DTD family. In terms of assembly, homodimer.

It is found in the cytoplasm. It carries out the reaction glycyl-tRNA(Ala) + H2O = tRNA(Ala) + glycine + H(+). It catalyses the reaction a D-aminoacyl-tRNA + H2O = a tRNA + a D-alpha-amino acid + H(+). Functionally, an aminoacyl-tRNA editing enzyme that deacylates mischarged D-aminoacyl-tRNAs. Also deacylates mischarged glycyl-tRNA(Ala), protecting cells against glycine mischarging by AlaRS. Acts via tRNA-based rather than protein-based catalysis; rejects L-amino acids rather than detecting D-amino acids in the active site. By recycling D-aminoacyl-tRNA to D-amino acids and free tRNA molecules, this enzyme counteracts the toxicity associated with the formation of D-aminoacyl-tRNA entities in vivo and helps enforce protein L-homochirality. The protein is D-aminoacyl-tRNA deacylase of Lactobacillus delbrueckii subsp. bulgaricus (strain ATCC BAA-365 / Lb-18).